A 316-amino-acid chain; its full sequence is Retinol dehydrogenase 12 (316 aa).

46 to 52 (GANTGIG) contacts NADP(+). Ser-175 provides a ligand contact to substrate. Residue Tyr-200 is the Proton acceptor of the active site.

Belongs to the short-chain dehydrogenases/reductases (SDR) family. In terms of tissue distribution, expressed in the inner segments of the photoreceptor in retina.

The catalysed reaction is all-trans-retinol + NADP(+) = all-trans-retinal + NADPH + H(+). It catalyses the reaction 11-cis-retinol + NADP(+) = 11-cis-retinal + NADPH + H(+). The enzyme catalyses 9-cis-retinol + NADP(+) = 9-cis-retinal + NADPH + H(+). It carries out the reaction a 4-hydroxynonen-1-ol + NADP(+) = a 4-hydroxynonenal + NADPH + H(+). The catalysed reaction is (E)-non-2-en-1-ol + NADP(+) = (E)-non-2-enal + NADPH + H(+). It catalyses the reaction (Z)-non-6-en-1-ol + NADP(+) = (Z)-non-6-enal + NADPH + H(+). The enzyme catalyses nonan-1-ol + NADP(+) = nonanal + NADPH + H(+). The protein operates within cofactor metabolism; retinol metabolism. In terms of biological role, retinoids dehydrogenase/reductase with a clear preference for NADP. Displays high activity towards 9-cis, 11-cis and all-trans-retinal. Shows very weak activity toward 13-cis-retinol. Also exhibits activity, albeit with lower affinity than for retinaldehydes, towards lipid peroxidation products (C9 aldehydes) such as 4-hydroxynonenal and trans-2-nonenal. Plays an important function in photoreceptor cells to detoxify 4-hydroxynonenal and potentially other toxic aldehyde products resulting from lipid peroxidation. Has no dehydrogenase activity towards steroids. The chain is Retinol dehydrogenase 12 (Rdh12) from Mus musculus (Mouse).